The primary structure comprises 229 residues: RNA pyrophosphohydrolase (229 aa).

The Nudix hydrolase domain occupies 6–149; that stretch reads GFRPNVGIIL…KRGVYEMALT (144 aa). The Nudix box motif lies at 38–59; the sequence is GGIDRGETPEQAMFRELHEEVG. The tract at residues 168-229 is disordered; it reads SGMRPREAHE…QVLHPDPGKA (62 aa).

This sequence belongs to the Nudix hydrolase family. RppH subfamily. It depends on a divalent metal cation as a cofactor.

Its function is as follows. Accelerates the degradation of transcripts by removing pyrophosphate from the 5'-end of triphosphorylated RNA, leading to a more labile monophosphorylated state that can stimulate subsequent ribonuclease cleavage. The sequence is that of RNA pyrophosphohydrolase from Delftia acidovorans (strain DSM 14801 / SPH-1).